The chain runs to 176 residues: CASP-like protein 5A1 (176 aa).

Residues 1-45 (MDASHPAVYPVGVPPTAVDPPPRVRMKDYEGMPSTLGGLVLRSGQ) lie on the Cytoplasmic side of the membrane. A helical membrane pass occupies residues 46 to 66 (FACAVTALSIMISIPDFSSVT). A topological domain (extracellular) is located at residue alanine 67. Residues 68–88 (FCYLVAAMALQLLWSVSLAVV) traverse the membrane as a helical segment. Over 89–102 (DGYALLLRRTLHNP) the chain is Cytoplasmic. Residues 103 to 123 (VLLSLLVIGDWVTSTLSLAAA) form a helical membrane-spanning segment. Residues 124-151 (CSSAGITVLIDSDLAQCAHNHCGRYEAA) lie on the Extracellular side of the membrane. The helical transmembrane segment at 152–172 (VAMAFLTWFLVSLSFFFSFWL) threads the bilayer. Residues 173–176 (LATR) are Cytoplasmic-facing.

The protein belongs to the Casparian strip membrane proteins (CASP) family. In terms of assembly, homodimer and heterodimers.

It localises to the cell membrane. This Selaginella moellendorffii (Spikemoss) protein is CASP-like protein 5A1.